A 70-amino-acid chain; its full sequence is MKQDIHPKYEEITATCSCGNVMKIRSTLGKDINLDVCSSCHPFYTGKQRNVDTGGRVDRFKKRFGALGKK.

Zn(2+) is bound by residues cysteine 16, cysteine 18, cysteine 37, and cysteine 40.

The protein belongs to the bacterial ribosomal protein bL31 family. Type A subfamily. As to quaternary structure, part of the 50S ribosomal subunit. Zn(2+) serves as cofactor.

Functionally, binds the 23S rRNA. The polypeptide is Large ribosomal subunit protein bL31 (Alteromonas mediterranea (strain DSM 17117 / CIP 110805 / LMG 28347 / Deep ecotype)).